A 509-amino-acid polypeptide reads, in one-letter code: ATP synthase subunit alpha (509 aa).

An ATP-binding site is contributed by 169 to 176 (GDRQTGKT).

The protein belongs to the ATPase alpha/beta chains family. As to quaternary structure, F-type ATPases have 2 components, CF(1) - the catalytic core - and CF(0) - the membrane proton channel. CF(1) has five subunits: alpha(3), beta(3), gamma(1), delta(1), epsilon(1). CF(0) has three main subunits: a(1), b(2) and c(9-12). The alpha and beta chains form an alternating ring which encloses part of the gamma chain. CF(1) is attached to CF(0) by a central stalk formed by the gamma and epsilon chains, while a peripheral stalk is formed by the delta and b chains.

The protein localises to the cell inner membrane. It catalyses the reaction ATP + H2O + 4 H(+)(in) = ADP + phosphate + 5 H(+)(out). Functionally, produces ATP from ADP in the presence of a proton gradient across the membrane. The alpha chain is a regulatory subunit. This chain is ATP synthase subunit alpha, found in Bradyrhizobium diazoefficiens (strain JCM 10833 / BCRC 13528 / IAM 13628 / NBRC 14792 / USDA 110).